Here is a 224-residue protein sequence, read N- to C-terminus: UPF0319 protein VC_1853 (224 aa).

Positions 1–21 (MKLNPLILGLLLSFSAGHSLA) are cleaved as a signal peptide.

It belongs to the UPF0319 family.

This chain is UPF0319 protein VC_1853, found in Vibrio cholerae serotype O1 (strain ATCC 39315 / El Tor Inaba N16961).